The primary structure comprises 914 residues: Ubiquitin carboxyl-terminal hydrolase 20 (914 aa).

The UBP-type zinc finger occupies 6–111 (DLCPHLDSIG…GSSSKFSEQD (106 aa)). Zn(2+) contacts are provided by C8, H10, C30, C33, C43, C48, C53, H60, H64, H70, C83, and C86. A phosphoserine mark is found at S112, S132, and S134. Residues 145–685 (TGMKNLGNSC…EGYVLFYRKS (541 aa)) form the USP domain. The active-site Nucleophile is the C154. Disordered stretches follow at residues 257–347 (LTEA…VDED) and 360–415 (QPAE…ASPV). T258 carries the post-translational modification Phosphothreonine. Residues 259–279 (EARDSDSSDTDEKREGDRSPS) are compositionally biased toward basic and acidic residues. S305 is modified (phosphoserine). A compositionally biased stretch (basic and acidic residues) spans 316–332 (EAGRAISEKERMKDRKF). S368 is subject to Phosphoserine. T377 is subject to Phosphothreonine. 2 positions are modified to phosphoserine: S408 and S413. H643 acts as the Proton acceptor in catalysis. DUSP domains are found at residues 687–780 (EEAM…LYVC) and 789–892 (ALAK…RQSV).

This sequence belongs to the peptidase C19 family. USP20/USP33 subfamily. Interacts with VHL, leading to its ubiquitination and subsequent degradation. Interacts with CCP110. Interacts with DIO2. Interacts with HIF1A. Interacts with ADRB2. Interacts with USP18. Post-translationally, ubiquitinated via a VHL-dependent pathway for proteasomal degradation.

It localises to the cytoplasm. It is found in the endoplasmic reticulum. The protein localises to the perinuclear region. The protein resides in the cytoskeleton. Its subcellular location is the microtubule organizing center. It localises to the centrosome. The catalysed reaction is Thiol-dependent hydrolysis of ester, thioester, amide, peptide and isopeptide bonds formed by the C-terminal Gly of ubiquitin (a 76-residue protein attached to proteins as an intracellular targeting signal).. In terms of biological role, deubiquitinating enzyme that plays a role in many cellular processes including autophagy, cellular antiviral response or membrane protein biogenesis. Attenuates TLR4-mediated NF-kappa-B signaling by cooperating with beta-arrestin-2/ARRB2 and inhibiting TRAF6 autoubiquitination. Promotes cellular antiviral responses by deconjugating 'Lys-33' and 'Lys-48'-linked ubiquitination of STING1 leading to its stabilization. Plays an essential role in autophagy induction by regulating the ULK1 stability through deubiquitination of ULK1. Acts as a positive regulator for NF-kappa-B activation by TNF-alpha through deubiquitinating 'Lys-48'-linked polyubiquitination of SQSTM1, leading to its increased stability. Acts as a regulator of G-protein coupled receptor (GPCR) signaling by mediating the deubiquitination beta-2 adrenergic receptor (ADRB2). Plays a central role in ADRB2 recycling and resensitization after prolonged agonist stimulation by constitutively binding ADRB2, mediating deubiquitination of ADRB2 and inhibiting lysosomal trafficking of ADRB2. Upon dissociation, it is probably transferred to the translocated beta-arrestins, possibly leading to beta-arrestins deubiquitination and disengagement from ADRB2. This suggests the existence of a dynamic exchange between the ADRB2 and beta-arrestins. Deubiquitinates DIO2, thereby regulating thyroid hormone regulation. Deubiquitinates HIF1A, leading to stabilize HIF1A and enhance HIF1A-mediated activity. Deubiquitinates MCL1, a pivotal member of the anti-apoptotic Bcl-2 protein family to regulate its stability. Within the endoplasmic reticulum, participates with USP33 in the rescue of post-translationally targeted membrane proteins that are inappropriately ubiquitinated by the cytosolic protein quality control in the cytosol. The polypeptide is Ubiquitin carboxyl-terminal hydrolase 20 (USP20) (Homo sapiens (Human)).